Consider the following 257-residue polypeptide: NH(3)-dependent NAD(+) synthetase (257 aa).

28–35 (GISGGVDS) provides a ligand contact to ATP. D34 provides a ligand contact to Mg(2+). A deamido-NAD(+)-binding site is contributed by R109. T129 is a binding site for ATP. E134 contacts Mg(2+). K142 and D149 together coordinate deamido-NAD(+). Residues K158 and S180 each contribute to the ATP site. Position 240–241 (240–241 (HK)) interacts with deamido-NAD(+).

Belongs to the NAD synthetase family. As to quaternary structure, homodimer.

It catalyses the reaction deamido-NAD(+) + NH4(+) + ATP = AMP + diphosphate + NAD(+) + H(+). The protein operates within cofactor biosynthesis; NAD(+) biosynthesis; NAD(+) from deamido-NAD(+) (ammonia route): step 1/1. In terms of biological role, catalyzes the ATP-dependent amidation of deamido-NAD to form NAD. Uses ammonia as a nitrogen source. This Pyrococcus horikoshii (strain ATCC 700860 / DSM 12428 / JCM 9974 / NBRC 100139 / OT-3) protein is NH(3)-dependent NAD(+) synthetase.